A 412-amino-acid chain; its full sequence is Divalent metal cation transporter MntH (412 aa).

Topologically, residues methionine 1–leucine 19 are cytoplasmic. A helical transmembrane segment spans residues alanine 20 to alanine 39. Residues threonine 40–glutamine 51 are Periplasmic-facing. Residues leucine 52–alanine 71 traverse the membrane as a helical segment. Over lysine 72 to tryptophan 95 the chain is Cytoplasmic. A helical membrane pass occupies residues phenylalanine 96–isoleucine 118. The Periplasmic portion of the chain corresponds to glycine 119–glycine 125. The chain crosses the membrane as a helical span at residues valine 126–leucine 145. At glutamine 146–lysine 155 the chain is on the cytoplasmic side. The chain crosses the membrane as a helical span at residues valine 156 to serine 175. The Periplasmic segment spans residues glutamine 176–alanine 196. A helical membrane pass occupies residues valine 197 to threonine 220. At glutamine 221–aspartate 238 the chain is on the cytoplasmic side. Residues valine 239–alanine 258 traverse the membrane as a helical segment. The Periplasmic portion of the chain corresponds to alanine 259–tyrosine 276. A helical transmembrane segment spans residues leucine 277–alanine 297. Topologically, residues alanine 298–arginine 327 are cytoplasmic. Residues arginine 328 to aspartate 344 traverse the membrane as a helical segment. Topologically, residues proline 345–valine 350 are periplasmic. Residues methionine 351 to phenylalanine 370 form a helical membrane-spanning segment. The Cytoplasmic segment spans residues threonine 371–lysine 387. A helical transmembrane segment spans residues glutamine 388–valine 406. Residues glycine 407–leucine 412 lie on the Periplasmic side of the membrane.

The protein belongs to the NRAMP family.

The protein localises to the cell inner membrane. Functionally, h(+)-stimulated, divalent metal cation uptake system. In Escherichia coli O127:H6 (strain E2348/69 / EPEC), this protein is Divalent metal cation transporter MntH.